Here is a 400-residue protein sequence, read N- to C-terminus: Acetate kinase (400 aa).

A Mg(2+)-binding site is contributed by Asn-10. Position 17 (Lys-17) interacts with ATP. Arg-91 contributes to the substrate binding site. Residue Asp-150 is the Proton donor/acceptor of the active site. ATP contacts are provided by residues 210 to 214, 285 to 287, and 333 to 337; these read HLGNG, DCR, and GIGEN. Glu-387 lines the Mg(2+) pocket.

Belongs to the acetokinase family. Homodimer. The cofactor is Mg(2+). Mn(2+) serves as cofactor.

It is found in the cytoplasm. It catalyses the reaction acetate + ATP = acetyl phosphate + ADP. Its pathway is metabolic intermediate biosynthesis; acetyl-CoA biosynthesis; acetyl-CoA from acetate: step 1/2. Its function is as follows. Catalyzes the formation of acetyl phosphate from acetate and ATP. Can also catalyze the reverse reaction. In Proteus mirabilis (strain HI4320), this protein is Acetate kinase.